Consider the following 337-residue polypeptide: Probable poly [ADP-ribose] polymerase DDB_G0278045 (337 aa).

Positions 21 to 231 (KKWDIIYKQR…NNNKNKNKNN (211 aa)) constitute a PARP catalytic domain. The segment covering 218-242 (NNTNNNNKNKNKNNNKNNNKNIKIQ) has biased composition (low complexity). Residues 218 to 247 (NNTNNNNKNKNKNNNKNNNKNIKIQNENKN) are disordered.

It carries out the reaction L-aspartyl-[protein] + NAD(+) = 4-O-(ADP-D-ribosyl)-L-aspartyl-[protein] + nicotinamide. It catalyses the reaction L-glutamyl-[protein] + NAD(+) = 5-O-(ADP-D-ribosyl)-L-glutamyl-[protein] + nicotinamide. The enzyme catalyses NAD(+) + (ADP-D-ribosyl)n-acceptor = nicotinamide + (ADP-D-ribosyl)n+1-acceptor + H(+).. This is Probable poly [ADP-ribose] polymerase DDB_G0278045 from Dictyostelium discoideum (Social amoeba).